Reading from the N-terminus, the 157-residue chain is uncharacterized protein (157 aa).

This is an uncharacterized protein from Lepidoptera (butterflies and moths).